Consider the following 177-residue polypeptide: Platelet glycoprotein IX (177 aa).

The N-terminal stretch at 1-16 is a signal peptide; that stretch reads MPAWGALFLLWATAEA. One can recognise an LRRNT domain in the interval 17 to 51; it reads TKDCPSPCTCRALETMGLWVDCRGHGLTALPALPA. Residues 17–147 are Extracellular-facing; that stretch reads TKDCPSPCTC…QLQASWVRPG (131 aa). Asn-60 is a glycosylation site (N-linked (GlcNAc...) asparagine). The LRR repeat unit spans residues 60-83; sequence NNSLQSVPPGAFDHLPQLQTLDVT. The LRRCT domain maps to 85 to 137; that stretch reads NPWHCDCSLTYLRLWLEDRTPEALLQVRCASPSLAAHGPLGRLTGYQLGSCGW. Residues 148–168 form a helical membrane-spanning segment; that stretch reads VLWDVALVAVAALGLALLAGL. Topologically, residues 169–177 are cytoplasmic; it reads LCATTEALD.

As to quaternary structure, two GP-Ib beta are disulfide-linked to one GP-Ib alpha. GP-IX is complexed with the GP-Ib heterodimer via a non covalent linkage.

Its subcellular location is the membrane. Its function is as follows. The GPIb-V-IX complex functions as the vWF receptor and mediates vWF-dependent platelet adhesion to blood vessels. The adhesion of platelets to injured vascular surfaces in the arterial circulation is a critical initiating event in hemostasis. GP-IX may provide for membrane insertion and orientation of GP-Ib. This Homo sapiens (Human) protein is Platelet glycoprotein IX (GP9).